Reading from the N-terminus, the 245-residue chain is Geranylgeranylglyceryl phosphate synthase (245 aa).

Mg(2+) contacts are provided by aspartate 20 and serine 50. Residues 169–175 (YLEAGSG), 202–203 (GG), and 224–225 (GT) contribute to the sn-glycerol 1-phosphate site.

Belongs to the GGGP/HepGP synthase family. Group II subfamily. The cofactor is Mg(2+).

It is found in the cytoplasm. It carries out the reaction sn-glycerol 1-phosphate + (2E,6E,10E)-geranylgeranyl diphosphate = sn-3-O-(geranylgeranyl)glycerol 1-phosphate + diphosphate. It participates in membrane lipid metabolism; glycerophospholipid metabolism. Its function is as follows. Prenyltransferase that catalyzes the transfer of the geranylgeranyl moiety of geranylgeranyl diphosphate (GGPP) to the C3 hydroxyl of sn-glycerol-1-phosphate (G1P). This reaction is the first ether-bond-formation step in the biosynthesis of archaeal membrane lipids. The polypeptide is Geranylgeranylglyceryl phosphate synthase (Ignicoccus hospitalis (strain KIN4/I / DSM 18386 / JCM 14125)).